A 351-amino-acid chain; its full sequence is Glucan endo-1,3-beta-glucosidase (351 aa).

The N-terminal stretch at 1–32 (MALWYLFNKRSLGAAVLILVGLLMCNIQITGA) is a signal peptide. Position 33 is a pyrrolidone carboxylic acid (Gln-33). Residues Asn-79 and Asn-99 are each glycosylated (N-linked (GlcNAc...) asparagine). Glu-128 functions as the Proton donor in the catalytic mechanism. Asn-235 carries an N-linked (GlcNAc...) asparagine glycan. Catalysis depends on Glu-268, which acts as the Nucleophile.

It belongs to the glycosyl hydrolase 17 family. In terms of processing, glycosylated. Post-translationally, the N-terminus is blocked.

It localises to the secreted. The protein localises to the extracellular space. The protein resides in the extracellular matrix. It carries out the reaction Hydrolysis of (1-&gt;3)-beta-D-glucosidic linkages in (1-&gt;3)-beta-D-glucans.. Implicated in the defense of plants against pathogens. The protein is Glucan endo-1,3-beta-glucosidase (SP41B) of Nicotiana tabacum (Common tobacco).